The following is a 314-amino-acid chain: ATP synthase gamma chain (314 aa).

Belongs to the ATPase gamma chain family. As to quaternary structure, F-type ATPases have 2 components, CF(1) - the catalytic core - and CF(0) - the membrane proton channel. CF(1) has five subunits: alpha(3), beta(3), gamma(1), delta(1), epsilon(1). CF(0) has three main subunits: a, b and c.

It is found in the cell inner membrane. In terms of biological role, produces ATP from ADP in the presence of a proton gradient across the membrane. The gamma chain is believed to be important in regulating ATPase activity and the flow of protons through the CF(0) complex. This Gloeobacter violaceus (strain ATCC 29082 / PCC 7421) protein is ATP synthase gamma chain.